We begin with the raw amino-acid sequence, 86 residues long: Small ribosomal subunit protein bS16 (86 aa).

It belongs to the bacterial ribosomal protein bS16 family.

The chain is Small ribosomal subunit protein bS16 from Legionella pneumophila (strain Paris).